Reading from the N-terminus, the 160-residue chain is Transmembrane protein 191A (160 aa).

The chain crosses the membrane as a helical span at residues 24–44; that stretch reads FCFPLDFVSNLFWIFASKFII.

Belongs to the TMEM191 family.

It localises to the membrane. The chain is Transmembrane protein 191A (TMEM191A) from Homo sapiens (Human).